The following is a 598-amino-acid chain: Protein VASCULAR ASSOCIATED DEATH 1, chloroplastic (598 aa).

Residues 1-11 (MAMLSTASVSG) show a composition bias toward polar residues. Positions 1–64 (MAMLSTASVS…PSRGGDNQSE (64 aa)) are disordered. A chloroplast-targeting transit peptide spans 1–68 (MAMLSTASVS…GDNQSEVISK (68 aa)). N-linked (GlcNAc...) asparagine glycosylation occurs at N61. The 65-residue stretch at 70–134 (EEYRQLFRLP…PFAEISCVKR (65 aa)) folds into the GRAM domain. The 173-residue stretch at 272 to 444 (DFTKVAEAKF…MAHELLKQKK (173 aa)) folds into the VASt domain. N-linked (GlcNAc...) asparagine glycans are attached at residues N329 and N494. The chain crosses the membrane as a helical span at residues 507 to 527 (QVIVLAFAVILLMQVTIVVLL). Positions 553–595 (WLEKRMHFLREEMMMVEDRLQRMRQDHAALKAQFHHLERLLRR) form a coiled coil.

Its subcellular location is the membrane. The protein localises to the plastid. It is found in the chloroplast. In terms of biological role, involved in ethylene- and salicylic acid-dependent cell death control associated with cells in the vicinity of vascular bundles. The sequence is that of Protein VASCULAR ASSOCIATED DEATH 1, chloroplastic from Arabidopsis thaliana (Mouse-ear cress).